Consider the following 200-residue polypeptide: MIGHLRGIIVEKQPPYLLLEVAGVGYEITAPLSTFYHLPEPQKEILLYTHLIVREDAHTLYGFHNDHERRLFRALIKVNGVGPKLALAILSGIGPDEFVHCVLNQNIDQLVRIPGVGRKTAERLVIETKDGLSRWHTNDTPSPEGLRSSNTQPTQDAISALMALGYKPQEAKRAIDAIQKPDLSAETLIRLALKQMVLGT.

Positions 1–64 (MIGHLRGIIV…EDAHTLYGFH (64 aa)) are domain I. The tract at residues 65–143 (NDHERRLFRA…RWHTNDTPSP (79 aa)) is domain II. The interval 133 to 152 (SRWHTNDTPSPEGLRSSNTQ) is disordered. The interval 144–148 (EGLRS) is flexible linker. The interval 149–200 (SNTQPTQDAISALMALGYKPQEAKRAIDAIQKPDLSAETLIRLALKQMVLGT) is domain III.

The protein belongs to the RuvA family. In terms of assembly, homotetramer. Forms an RuvA(8)-RuvB(12)-Holliday junction (HJ) complex. HJ DNA is sandwiched between 2 RuvA tetramers; dsDNA enters through RuvA and exits via RuvB. An RuvB hexamer assembles on each DNA strand where it exits the tetramer. Each RuvB hexamer is contacted by two RuvA subunits (via domain III) on 2 adjacent RuvB subunits; this complex drives branch migration. In the full resolvosome a probable DNA-RuvA(4)-RuvB(12)-RuvC(2) complex forms which resolves the HJ.

Its subcellular location is the cytoplasm. In terms of biological role, the RuvA-RuvB-RuvC complex processes Holliday junction (HJ) DNA during genetic recombination and DNA repair, while the RuvA-RuvB complex plays an important role in the rescue of blocked DNA replication forks via replication fork reversal (RFR). RuvA specifically binds to HJ cruciform DNA, conferring on it an open structure. The RuvB hexamer acts as an ATP-dependent pump, pulling dsDNA into and through the RuvAB complex. HJ branch migration allows RuvC to scan DNA until it finds its consensus sequence, where it cleaves and resolves the cruciform DNA. In Coxiella burnetii (strain Dugway 5J108-111), this protein is Holliday junction branch migration complex subunit RuvA.